The following is a 770-amino-acid chain: MAQWNQLQQLDTRYLEQLHQLYSDSFPMELRQFLAPWIESQDWAYAASKESHATLVFHNLLGEIDQQYSRFLQESNVLYQHNLRRIKQFLQSRYLEKPMEIARIVARCLWEESRLLQTAATAAQQGGQANHPTAAVVTEKQQMLEQHLQDVRKRVQDLEQKMKVVENLQDDFDFNYKTLKSQGDMQDLNGNNQSVTRQKMQQLEQMLTALDQMRRSIVSELAGLLSAMEYVQKTLTDEELADWKRRQQIACIGGPPNICLDRLENWITSLAESQLQTRQQIKKLEELQQKVSYKGDPIVQHRPMLEERIVDLFRNLMKSAFVVERQPCMPMHPDRPLVIKTGVQFTTKVRLLVKFPELNYQLKIKVCIDKDSGDVAALRGSRKFNILGTNTKVMNMEESNNGSLSAEFKHLTLREQRCGNGGRANCDASLIVTEELHLITFETEVYHQGLKIDLETHSLPVVVISNICQMPNAWASILWYNMLTNNPKNVNFFTKPPIGTWDQVAEVLSWQFSSTTKRGLSIEQLTTLAEKLLGPGVNYSGCQITWAKFCKENMAGKGFSFWVWLDNIIDLVKKYILALWNEGYIMGFISKERERAILSTKPPGTFLLRFSESSKEGGVTFTWVEKDISGKTQIQSVEPYTKQQLNNMSFAEIIMGYKIMDATNILVSPLVYLYPDIPKEEAFGKYCRPESQEHPEADPGSAAPYLKTKFICVTPTTCSNTIDLPMSPRTLDSLMQFGNNGEGAEPSAGGQFESLTFDMDLTSECATSPM.

N-acetylalanine is present on alanine 2. N6-acetyllysine is present on residues lysine 49 and lysine 87. Residues 150–162 carry the Essential for nuclear import motif; the sequence is DVRKRVQDLEQKM. One can recognise an SH2 domain in the interval 580 to 670; sequence WNEGYIMGFI…DATNILVSPL (91 aa). Lysine 601, lysine 615, and lysine 631 each carry allysine; alternate. Residues lysine 601, lysine 615, and lysine 631 each carry the N6-acetyllysine; alternate modification. Tyrosine 640 carries the phosphotyrosine; by TYK2 modification. Allysine; alternate is present on lysine 685. Residue lysine 685 is modified to N6-acetyllysine; alternate. Position 705 is a phosphotyrosine; by FER and PTK6 (tyrosine 705). At lysine 707 the chain carries N6-acetyllysine. Threonine 714 carries the phosphothreonine modification. Position 727 is a phosphoserine; by DYRK2, NLK, NEK6, IRAK1, RPS6KA5, ZIPK/DAPK3 and PKC/PRKCE (serine 727).

It belongs to the transcription factor STAT family. Forms a homodimer or a heterodimer with a related family member (at least STAT1). Component of a promoter-binding complex composed of STAT3, NFATC3 and NFATC4; complex formation is enhanced by calcineurin. Interacts with IL31RA, NCOA1, PELP1, SIPAR, SOCS7, STATIP1 and TMF1. Interacts with IL23R in presence of IL23. Interacts (via SH2 domain) with NLK. Interacts with ARL2BP; the interaction is enhanced by LIF and JAK1 expression. Interacts with KPNA4 and KPNA5; KPNA4 may be the primary mediator of nuclear import. Interacts with CAV2; the interaction is increased on insulin-induced tyrosine phosphorylation of CAV2 and leads to STAT3 activation. Interacts with ARL2BP; interaction is enhanced with ARL2. Interacts with NEK6. Binds to CDK9 when activated and nuclear. Interacts with BMX. Interacts with ZIPK/DAPK3. Interacts with PIAS3; the interaction occurs on stimulation by IL6, CNTF or OSM and inhibits the DNA binding activity of STAT3. In prostate cancer cells, interacts with PRKCE and promotes DNA binding activity of STAT3. Interacts with STMN3, antagonizing its microtubule-destabilizing activity. Interacts with the 'Lys-129' acetylated form of BIRC5/survivin. Interacts with FER. Interacts (via SH2 domain) with EIF2AK2/PKR (via the kinase catalytic domain). Interacts with FGFR4. Interacts with INPP5F; the interaction is independent of STAT3 Tyr-705 phosphorylation status. Interacts with OCIAD1 and OCIAD2. Interacts (unphosphorylated or phosphorylated at Ser-727) with PHB1. Interacts and may form heterodimers with NHLH1. Found in a complex with SLC39A6, SLC39A10 and with the 'Ser-727' phosphorylated form of STAT3 throughout mitosis. Interacts (when acetylated) with EP300 (via bromo domain); interaction takes place following STAT3 acetylation by EP300 and promotes enhanceosome assembly. Interacts (when acetylated) with BRD2 (via bromo domain); interaction promotes STAT3 recruitment to chromatin and T-helper Th17 cell differentiation. Interacts with FAM220A/SIPAR; the interaction occurs in both the nucleus and the cytoplasm, is enhanced by IL6 and promotes STAT3 dephosphorylation. Interacts in both unphosphorylated and phosphorylated forms with FAM220A but interacts preferentially in the phosphorylated form in the nucleus. Interacts with PTPN2; the interaction is promoted by FAM220A and leads to STAT3 dephosphorylation which negatively regulates STAT3 transcriptional activator activity. Post-translationally, activated through tyrosine phosphorylation by BMX. Tyrosine phosphorylated in response to IL6, IL11, CNTF, LIF, KITLG/SCF, CSF1, EGF, PDGF, IFN-alpha and OSM. Activated KIT promotes phosphorylation on tyrosine residues and subsequent translocation to the nucleus. Tyrosine phosphorylated in response to constitutively activated FGFR1, FGFR2, FGFR3 and FGFR4. Phosphorylated on serine upon DNA damage, probably by ATM or ATR. Serine phosphorylation is important for the formation of stable DNA-binding STAT3 homodimers and maximal transcriptional activity. ARL2BP may participate in keeping the phosphorylated state of STAT3 within the nucleus. Tyrosine phosphorylated upon stimulation with EGF. Upon LPS challenge, phosphorylated within the nucleus by IRAK1. Phosphorylated on Ser-727 by RPS6KA5. Dephosphorylation on tyrosine residues by PTPN2 negatively regulates IL6/interleukin-6 signaling. Phosphorylation at Tyr-705 by FER, isoform M2 of PKM (PKM2) or PTK6 leads to an increase of its transcriptional activity. Phosphorylation at Tyr-705 is increased in the presence of calcineurin. Phosphorylation at Tyr-640 by TYK2 negatively regulates transcriptional activity. In terms of processing, acetylated on lysine residues by EP300/p300, promoting its activation. Acetylation at Lys-49 and Lys-87 by EP300/p300 promotes its activation. Acetylation at Lys-87 by EP300/p300 promotes its association with BRD2 and recruitment to chromatin. Deacetylated at Lys-49 and Lys-87 by HDAC1. Acetylation at Lys-685 by EP300/p300 promotes its homodimerization and activation. Deacetylated at Lys-685 by HDAC3. Acetylated on lysine residues by CREBBP. Deacetylation by LOXL3 leads to disrupt STAT3 dimerization and inhibit STAT3 transcription activity. Oxidation of lysine residues to allysine on STAT3 preferentially takes place on lysine residues that are acetylated. Some lysine residues are oxidized to allysine by LOXL3, leading to disrupt STAT3 dimerization and inhibit STAT3 transcription activity. Oxidation of lysine residues to allysine on STAT3 preferentially takes place on lysine residues that are acetylated. Detected in lung, heart, oviduct, ovary, uterus and kidney (at protein level). Expressed in cardiomyocytes (at protein level). Detected in ovary, oviduct, and at lower levels in uterus and lung.

The protein localises to the cytoplasm. Its subcellular location is the nucleus. Its function is as follows. Signal transducer and transcription activator that mediates cellular responses to interleukins, KITLG/SCF, LEP and other growth factors. Once activated, recruits coactivators, such as NCOA1 or MED1, to the promoter region of the target gene. May mediate cellular responses to activated FGFR1, FGFR2, FGFR3 and FGFR4. Upon activation of IL6ST/gp130 signaling by interleukin-6 (IL6), binds to the IL6-responsive elements identified in the promoters of various acute-phase protein genes. Activated by IL31 through IL31RA. Acts as a regulator of inflammatory response by regulating differentiation of naive CD4(+) T-cells into T-helper Th17 or regulatory T-cells (Treg): acetylation promotes its transcription activity and cell differentiation while deacetylation and oxidation of lysine residues by LOXL3 inhibits differentiation. Involved in cell cycle regulation by inducing the expression of key genes for the progression from G1 to S phase, such as CCND1. Mediates the effects of LEP on melanocortin production, body energy homeostasis and lactation. May play an apoptotic role by transctivating BIRC5 expression under LEP activation. Cytoplasmic STAT3 represses macroautophagy by inhibiting EIF2AK2/PKR activity. Plays a crucial role in basal beta cell functions, such as regulation of insulin secretion. Following JAK/STAT signaling activation and as part of a complex with NFATC3 and NFATC4, binds to the alpha-beta E4 promoter region of CRYAB and activates transcription in cardiomyocytes. Plays an important role in host defense in methicillin-resistant S.aureus lung infection by regulating the expression of the antimicrobial lectin REG3G. This chain is Signal transducer and activator of transcription 3 (Stat3), found in Rattus norvegicus (Rat).